We begin with the raw amino-acid sequence, 319 residues long: tRNA uridine(34) hydroxylase (319 aa).

The region spanning 124-218 (LDEDTVILDA…YGKNEETKGE (95 aa)) is the Rhodanese domain. Cys178 serves as the catalytic Cysteine persulfide intermediate.

This sequence belongs to the TrhO family.

It carries out the reaction uridine(34) in tRNA + AH2 + O2 = 5-hydroxyuridine(34) in tRNA + A + H2O. Functionally, catalyzes oxygen-dependent 5-hydroxyuridine (ho5U) modification at position 34 in tRNAs. In Listeria monocytogenes serotype 4b (strain CLIP80459), this protein is tRNA uridine(34) hydroxylase.